The sequence spans 122 residues: Ribosome-binding factor A (122 aa).

The protein belongs to the RbfA family. As to quaternary structure, monomer. Binds 30S ribosomal subunits, but not 50S ribosomal subunits or 70S ribosomes.

It is found in the cytoplasm. In terms of biological role, one of several proteins that assist in the late maturation steps of the functional core of the 30S ribosomal subunit. Associates with free 30S ribosomal subunits (but not with 30S subunits that are part of 70S ribosomes or polysomes). Required for efficient processing of 16S rRNA. May interact with the 5'-terminal helix region of 16S rRNA. In Polaromonas naphthalenivorans (strain CJ2), this protein is Ribosome-binding factor A.